The sequence spans 858 residues: Beta-galactosidase 6 (858 aa).

Residues 1-30 form the signal peptide; it reads MAAATVGVLLRLLLLPVVVVVSLLVGASRA. N-linked (GlcNAc...) asparagine glycosylation is present at Asn32. Glu189 (proton donor) is an active-site residue. Residue Glu258 is the Nucleophile of the active site. Asn259, Asn482, Asn507, Asn595, and Asn830 each carry an N-linked (GlcNAc...) asparagine glycan. An SUEL-type lectin domain is found at 772 to 858; it reads QTQGPALRLE…KSLVVEAACS (87 aa).

It belongs to the glycosyl hydrolase 35 family.

Its subcellular location is the secreted. It is found in the extracellular space. The protein localises to the apoplast. It carries out the reaction Hydrolysis of terminal non-reducing beta-D-galactose residues in beta-D-galactosides.. Functionally, releases galactose by hydrolysis of plant cell wall galactose-containing polysaccharides such as galacto-xyloglucan, pectic galactan and galactan (in vitro). The protein is Beta-galactosidase 6 of Oryza sativa subsp. japonica (Rice).